Consider the following 74-residue polypeptide: Putative membrane protein insertion efficiency factor (74 aa).

This sequence belongs to the UPF0161 family.

Its subcellular location is the cell inner membrane. Could be involved in insertion of integral membrane proteins into the membrane. The protein is Putative membrane protein insertion efficiency factor of Syntrophus aciditrophicus (strain SB).